A 428-amino-acid chain; its full sequence is MSAIVDIIGREVLDSRGNPTVECDVLLESGVMGRAAVPSGASTGSREAIELRDGDKSRYLGKGVLKAVQNINVEIAETILGLDASEQAFLDHTLIELDGTHNKARLGANATLAVSMAVARAAAEEAGLPLYRYFGGSGGMQLPVPMMNIVNGGAHANNSLDIQEFMVMPVGAENFRDALRCGAEIFHELKKILAAQGMPTTVGDEGGFAPNFKSNHECLQIIMKAIEGAGYQAGEDVLLALDCAASEFYKDGKYHLSGEGLQLTSSEFSDYLGNLADQFPIVSIEDGMHESDWDGWADITQKLGKKIQLVGDDLFVTNTRILKEGIDKGIANSILIKINQIGTLTETFAAIEMAKRANYTAVISHRSGETEDSTIADIAVGTNAGQIKTGSLSRSDRIAKYNQLLRIEEDLGDVATYPGKSVFYNLKR.

(2R)-2-phosphoglycerate is bound at residue Gln163. Catalysis depends on Glu205, which acts as the Proton donor. Residues Asp242, Glu285, and Asp312 each contribute to the Mg(2+) site. Lys337, Arg366, Ser367, and Lys388 together coordinate (2R)-2-phosphoglycerate. The Proton acceptor role is filled by Lys337.

It belongs to the enolase family. Mg(2+) is required as a cofactor.

The protein resides in the cytoplasm. It localises to the secreted. The protein localises to the cell surface. It carries out the reaction (2R)-2-phosphoglycerate = phosphoenolpyruvate + H2O. The protein operates within carbohydrate degradation; glycolysis; pyruvate from D-glyceraldehyde 3-phosphate: step 4/5. Functionally, catalyzes the reversible conversion of 2-phosphoglycerate (2-PG) into phosphoenolpyruvate (PEP). It is essential for the degradation of carbohydrates via glycolysis. In Polynucleobacter asymbioticus (strain DSM 18221 / CIP 109841 / QLW-P1DMWA-1) (Polynucleobacter necessarius subsp. asymbioticus), this protein is Enolase.